The sequence spans 1091 residues: Rho GTPase-activating protein 7 (1091 aa).

An SAM domain is found at 11–78 (LTQIEAKEAC…LNKCAVMKLE (68 aa)). Phosphoserine is present on residues serine 86, serine 89, and serine 320. The segment at 273-447 (QLNCVEISAL…RLSIYDNVPG (175 aa)) is focal adhesion-targeting (FAT). Disordered stretches follow at residues 292-327 (VRKR…RTRS), 382-439 (PKAL…SSRL), and 491-553 (SDEG…GVGA). Low complexity-rich tracts occupy residues 297–323 (VSNS…SPVT) and 386–400 (SNGS…SSVN). Residues 414–425 (LRRENSSDSPKE) show a composition bias toward basic and acidic residues. The span at 499-511 (ALDSVSPCPSSPK) shows a compositional bias: polar residues. Positions 513 to 523 (IHLDVDNDRAT) are enriched in basic and acidic residues. Residues 526 to 535 (DLDSTGNSLN) show a composition bias toward polar residues. The tract at residues 614-636 (KHGFSWAVPKFMKRIKVPDYKDR) is polybasic cluster (PBR). One can recognise a Rho-GAP domain in the interval 641-847 (VPLTVNVQRT…HMIAECKKLF (207 aa)). The 208-residue stretch at 877 to 1084 (RNDESADYQH…RDSFSNQNTE (208 aa)) folds into the START domain.

In terms of assembly, interacts with EF1A1, facilitates EF1A1 distribution to the membrane periphery and ruffles upon growth factor stimulation and suppresses cell migration. Interacts with tensin TNS1 (via N-terminus); the interaction is decreased by phosphorylation of TNS1. Interacts with TNS3 and PTEN; in resting cells, interacts with TNS3 (via C2 tensin-type domain) but, following growth factor stimulation, TNS3 and PTEN are phosphorylated which leads to weakened interaction with TNS3 and enhanced interaction with PTEN. Interacts (via C-terminus) with tensin TNS4 (via SH2 domain); the interaction is independent of tyrosine phosphorylation of DLC1.

The protein localises to the cytoplasm. The protein resides in the cell junction. It localises to the focal adhesion. Its subcellular location is the membrane. Functionally, functions as a GTPase-activating protein for the small GTPases RHOA, RHOB, RHOC and CDC42, terminating their downstream signaling. This induces morphological changes and detachment through cytoskeletal reorganization, playing a critical role in biological processes such as cell migration and proliferation. Also functions in vivo as an activator of the phospholipase PLCD1. Active DLC1 increases cell migration velocity but reduces directionality. Required for growth factor-induced epithelial cell migration; in resting cells, interacts with TNS3 while PTEN interacts with the p85 regulatory subunit of the PI3K kinase complex but growth factor stimulation induces phosphorylation of TNS3 and PTEN, causing them to change their binding preference so that PTEN interacts with DLC1 and TNS3 interacts with p85. The PTEN-DLC1 complex translocates to the posterior of migrating cells to activate RHOA while the TNS3-p85 complex translocates to the leading edge of migrating cells to promote RAC1 activation. The protein is Rho GTPase-activating protein 7 (DLC1) of Canis lupus familiaris (Dog).